Reading from the N-terminus, the 208-residue chain is MDKFTELTAIAAPMPTENIDTDQIIPARFLKTIQRTGLGKNAFAAQRYDADGNEKPDFVLNQEPYRHAEILITYDNLGCGSSREHAPWALLDFGIRCVIAPSFADIFFNNCFKNGILPIRLPREICDELMDDARQGANSRLTVDLERQVIVRPNGEGIPFDVDPFRRHMLLEGLDDIGQTMAHDAEITSFEHRPSRAWVPSITIGTVK.

It belongs to the LeuD family. LeuD type 1 subfamily. Heterodimer of LeuC and LeuD.

It catalyses the reaction (2R,3S)-3-isopropylmalate = (2S)-2-isopropylmalate. The protein operates within amino-acid biosynthesis; L-leucine biosynthesis; L-leucine from 3-methyl-2-oxobutanoate: step 2/4. Functionally, catalyzes the isomerization between 2-isopropylmalate and 3-isopropylmalate, via the formation of 2-isopropylmaleate. This chain is 3-isopropylmalate dehydratase small subunit, found in Gluconobacter oxydans (strain 621H) (Gluconobacter suboxydans).